The chain runs to 1111 residues: MVVSAGPWSSEKAEMNILEINEKLRPQLAENKQQFGNLKERCFLTQLAGFLANRQKKYKYEECKDLIKFMLRNERQFKEEKLAEQLKQAEELRQYKVLVHSQERELTQLKEKLREGRDASRSLNEHLQALLTPDEPDKSQGQDLQEQLAEGCRLAQHLVQKLSPENDEDEDEDVQVEEDEKVLESSAPREVQKAEESKVAEDSLEECAITCSNSHGPCDSNQPHKNIKITFEEDEVNSTLVVDRESSHDECQDALNILPVPGPTSSATNVSMVVSAGPLSSEKAEMNILEINEKLRPQLAEKKQQFRNLKEKCFLTQLAGFLANQQNKYKYEECKDLIKFMLRNERQFKEEKLAEQLKQAEELRQYKVLVHAQERELTQLREKLREGRDASRSLNEHLQALLTPDEPDKSQGQDLQEQLAEGCRLAQHLVQKLSPENDNDDDEDVQIEVAEKVQKSSAPREMQKAEEKEVPEDSLEECAITYSNSHGPYDSNQPHRKTKITFEEDKVDSTLIGSSSHVEREDAVHIIPENESDDEEEEEKGPVSPRNLQESEEEEVPQESWDEGYSTPSIPPEMLASYKSYSSTFHSLEEQQVCMAVDIGRHRWDQVKKEDQEATGPRLSRELLDEKGPEVLQDSLDRCYSTPSGCLELTDSCQPYRSAFYVLEQQRVGLAVDMDEIEKYQEVEEDQDPSCPRLSRELLDEKEPEVLQDSLGRWYSTPSGYLELPDLGQPYSSAVYSLEEQYLGLALDLDRIKKDQEEEEDQGPPCPRLSRELLEVVEPEVLQDSLDRCYSTPSSCLEQPDSCQPYGSSFYALEEKHVGFSLDVGEIEKKGKGKKRRGRRSKKKRRRGRKEGEENQNPPCPRLSRELLDEKEPEVLQDSLDRCYSTPSGYLELPDLGQPYSSAVYSLEEQYLGLALDVDRIKKDQEEEEDQGPPCPRLSRELLEVVEPEVLQDSLDRCYSTPSSCLEQPDSCQPYGSSFYALEEKHVGFSLDVGEIEKKGKGKKRRGRRSKKERRRGRKEGEEDQNPPCPRLNGVLMEVEEPEVLQDSLDGCYSTPSMYFELPDSFQHYRSVFYSFEEQHISFALYVDNRFFTLTVTSLHLVFQMEVIFPQ.

Residues 70-130 adopt a coiled-coil conformation; that stretch reads MLRNERQFKE…RSLNEHLQAL (61 aa). The segment at 161–198 is disordered; the sequence is KLSPENDEDEDEDVQVEEDEKVLESSAPREVQKAEESK. Over residues 165-181 the composition is skewed to acidic residues; sequence ENDEDEDEDVQVEEDEK. Residues 165 to 259 enclose the Olduvai 1 domain; it reads ENDEDEDEDV…ECQDALNILP (95 aa). Residues 341–401 are a coiled coil; it reads MLRNERQFKE…RSLNEHLQAL (61 aa). Olduvai domains lie at 436-528, 529-600, 601-692, 695-750, 751-843, 844-919, 920-1012, and 1013-1111; these read ENDN…HIIP, ENES…VDIG, RHRW…PSCP, SREL…LDLD, RIKK…RSKK, KRRR…LDVD, and ERRR…IFPQ. 2 disordered regions span residues 451-474 and 510-569; these read EKVQ…PEDS and TLIG…STPS. Composition is skewed to acidic residues over residues 530–539 and 550–562; these read NESDDEEEEE and ESEE…ESWD. Disordered regions lie at residues 829–871 and 999–1033; these read KKGK…LDEK and KGKG…PRLN. 2 stretches are compositionally biased toward basic residues: residues 831-849 and 1000-1018; these read GKGK…RRGR.

The protein belongs to the NBPF family. As to expression, expressed in a neuroblastoma cell line.

The protein resides in the cytoplasm. This Homo sapiens (Human) protein is NBPF family member NBPF9.